The sequence spans 231 residues: Phosphoheptose isomerase (231 aa).

The region spanning 35 to 190 is the SIS domain; sequence LAAVLGGGGR…CAAFDAALER (156 aa). Residue 50 to 52 coordinates substrate; the sequence is NGG. Residues histidine 59 and glutamate 63 each contribute to the Zn(2+) site. Substrate contacts are provided by residues glutamate 63, 92–93, 118–120, serine 123, and glutamine 170; these read ND and STS. Residues glutamine 170 and histidine 178 each coordinate Zn(2+). Composition is skewed to low complexity over residues 197–206 and 214–225; these read AAGSAASTGR and ASTGRAAGAGRA. The disordered stretch occupies residues 197–231; it reads AAGSAASTGRAARRERAASTGRAAGAGRAAQRKRR.

Belongs to the SIS family. GmhA subfamily. Requires Zn(2+) as cofactor.

It is found in the cytoplasm. It carries out the reaction 2 D-sedoheptulose 7-phosphate = D-glycero-alpha-D-manno-heptose 7-phosphate + D-glycero-beta-D-manno-heptose 7-phosphate. Its pathway is carbohydrate biosynthesis; D-glycero-D-manno-heptose 7-phosphate biosynthesis; D-glycero-alpha-D-manno-heptose 7-phosphate and D-glycero-beta-D-manno-heptose 7-phosphate from sedoheptulose 7-phosphate: step 1/1. Functionally, catalyzes the isomerization of sedoheptulose 7-phosphate in D-glycero-D-manno-heptose 7-phosphate. The sequence is that of Phosphoheptose isomerase from Streptomyces coelicolor (strain ATCC BAA-471 / A3(2) / M145).